We begin with the raw amino-acid sequence, 220 residues long: Thiopurine S-methyltransferase (220 aa).

S-adenosyl-L-methionine is bound by residues Trp-10, Leu-45, Glu-66, and Arg-123.

It belongs to the class I-like SAM-binding methyltransferase superfamily. TPMT family.

The protein resides in the cytoplasm. It catalyses the reaction S-adenosyl-L-methionine + a thiopurine = S-adenosyl-L-homocysteine + a thiopurine S-methylether.. This Pseudomonas syringae pv. syringae (strain B728a) protein is Thiopurine S-methyltransferase.